We begin with the raw amino-acid sequence, 1074 residues long: Semaphorin-5A (1074 aa).

The signal sequence occupies residues 1–22 (MKGACILAWLFSSLGVWRLARP). The Sema domain occupies 35-484 (HPVVSYKEIG…LQEHVVKIPL (450 aa)). 2 disulfide bridges follow: Cys-104-Cys-114 and Cys-131-Cys-140. N-linked (GlcNAc...) asparagine glycosylation is found at Asn-147, Asn-168, Asn-227, and Asn-277. 2 cysteine pairs are disulfide-bonded: Cys-254–Cys-357 and Cys-278–Cys-320. 2 N-linked (GlcNAc...) asparagine glycosylation sites follow: Asn-323 and Asn-367. In terms of domain architecture, PSI spans 486 to 533 (RCHFHQTRGACIGAQDPYCGWDAVMKKCTSLEESLSMTQWDQSVPTCP). 2 N-linked (GlcNAc...) asparagine glycosylation sites follow: Asn-536 and Asn-591. TSP type-1 domains are found at residues 540 to 593 (DGSF…TNCS), 595 to 651 (NGGW…LLCP), and 653 to 702 (HVFW…NACP). 6 cysteine pairs are disulfide-bonded: Cys-607-Cys-644, Cys-611-Cys-650, Cys-622-Cys-634, Cys-665-Cys-696, Cys-669-Cys-701, and Cys-680-Cys-686. The N-linked (GlcNAc...) asparagine glycan is linked to Asn-717. 3 consecutive TSP type-1 domains span residues 784–839 (NGAW…LPCP), 841–896 (DGVW…QTCP), and 897–944 (ENWS…VFDS). 6 disulfide bridges follow: Cys-796–Cys-833, Cys-800–Cys-838, Cys-811–Cys-823, Cys-853–Cys-890, Cys-857–Cys-895, and Cys-868–Cys-880. N-linked (GlcNAc...) asparagine glycosylation is found at Asn-898 and Asn-933. Residues 969–989 (FHMMAVGLSSSILGCLLTLLV) traverse the membrane as a helical segment. A glycan (N-linked (GlcNAc...) asparagine) is linked at Asn-1015.

Binds PLXNB3.

Its subcellular location is the membrane. Functionally, bifunctional axonal guidance cue regulated by sulfated proteoglycans; attractive effects result from interactions with heparan sulfate proteoglycans (HSPGs), while the inhibitory effects depend on interactions with chondroitin sulfate proteoglycans (CSPGs). Ligand for receptor PLXNB3. In glioma cells, SEMA5A stimulation of PLXNB3 results in the disassembly of F-actin stress fibers, disruption of focal adhesions and cellular collapse as well as inhibition of cell migration and invasion through ARHGDIA-mediated inactivation of RAC1. May promote angiogenesis by increasing endothelial cell proliferation and migration and inhibiting apoptosis. This Rattus norvegicus (Rat) protein is Semaphorin-5A (Sema5a).